The chain runs to 446 residues: Mitochondrial ribonuclease P protein 1 homolog (446 aa).

The N-terminal 24 residues, 1 to 24 (MLKHFARWRLGSQLLKGCAAPVRQ), are a transit peptide targeting the mitochondrion. A disordered region spans residues 41-67 (PQKKFVNPFSQPAPALSNDTISENKEE). Residues Ser-50 and Ser-57 each carry the phosphoserine modification. Position 60 is a phosphothreonine (Thr-60). Position 62 is a phosphoserine (Ser-62). Residues 119–158 (LWQIEMKKEADQRKKAERAKEAERRVAEMRKEREENTHII) adopt a coiled-coil conformation. The region spanning 179-373 (QNNRLTRAMQ…KHVPRRKVVQ (195 aa)) is the SAM-dependent MTase TRM10-type domain.

Belongs to the class IV-like SAM-binding methyltransferase superfamily. TRM10 family. Component of mitochondrial ribonuclease P, a complex composed of rswl/MRPP1, scu/MRPP2 and mldr/MRPP3.

The protein resides in the mitochondrion. Mitochondrial tRNA N1-methyltransferase involved in mitochondrial tRNA maturation. Component of mitochondrial ribonuclease P, a complex composed of rswl/MRPP1, scu/MRPP2 and mldr/MRPP3., which cleaves tRNA molecules in their 5'-ends. Essential for the structural and functional integrity of mitochondria. Function is essential for pupal development. In Drosophila melanogaster (Fruit fly), this protein is Mitochondrial ribonuclease P protein 1 homolog.